The primary structure comprises 417 residues: UDP-N-acetylglucosamine 1-carboxyvinyltransferase (417 aa).

Residue 22-23 (KN) coordinates phosphoenolpyruvate. R92 serves as a coordination point for UDP-N-acetyl-alpha-D-glucosamine. The active-site Proton donor is C116. C116 is subject to 2-(S-cysteinyl)pyruvic acid O-phosphothioketal. Residues D304 and I326 each contribute to the UDP-N-acetyl-alpha-D-glucosamine site.

The protein belongs to the EPSP synthase family. MurA subfamily.

It is found in the cytoplasm. The enzyme catalyses phosphoenolpyruvate + UDP-N-acetyl-alpha-D-glucosamine = UDP-N-acetyl-3-O-(1-carboxyvinyl)-alpha-D-glucosamine + phosphate. Its pathway is cell wall biogenesis; peptidoglycan biosynthesis. Its function is as follows. Cell wall formation. Adds enolpyruvyl to UDP-N-acetylglucosamine. This chain is UDP-N-acetylglucosamine 1-carboxyvinyltransferase, found in Geobacter sulfurreducens (strain ATCC 51573 / DSM 12127 / PCA).